Reading from the N-terminus, the 244-residue chain is Putative B3 domain-containing protein At2g31460 (244 aa).

The TF-B3 DNA-binding region spans 49-147; that stretch reads SSMHMENSGF…PVHDGVNLSG (99 aa). Disordered stretches follow at residues 175-196 and 217-244; these read DGNLPQDSGHDGHNDNLPQDSV and DSQGYLPDEDEDFGFNDDGSIRDSGHYQ. Over residues 235–244 the composition is skewed to basic and acidic residues; the sequence is GSIRDSGHYQ.

Its subcellular location is the nucleus. This is Putative B3 domain-containing protein At2g31460 from Arabidopsis thaliana (Mouse-ear cress).